A 385-amino-acid polypeptide reads, in one-letter code: Glucans biosynthesis protein C (385 aa).

The next 10 helical transmembrane spans lie at Ala17–Trp37, Met60–Leu80, Val91–Gln111, Ile137–Phe157, Lys173–Ile193, Phe212–Ile232, Leu239–Leu259, Thr274–Gly294, Ala311–Thr331, and Trp338–Ile358.

The protein belongs to the acyltransferase 3 family. OpgC subfamily.

The protein localises to the cell membrane. It functions in the pathway glycan metabolism; osmoregulated periplasmic glucan (OPG) biosynthesis. Its function is as follows. Necessary for the succinyl substitution of periplasmic glucans. Could catalyze the transfer of succinyl residues from the cytoplasmic side of the membrane to the nascent glucan backbones on the periplasmic side of the membrane. The polypeptide is Glucans biosynthesis protein C (Escherichia coli O17:K52:H18 (strain UMN026 / ExPEC)).